The sequence spans 146 residues: Large ribosomal subunit protein uL15 (146 aa).

The interval 1-65 is disordered; the sequence is MSDIQLNSLK…GQMPLQRRLP (65 aa). Gly residues predominate over residues 24–34; that stretch reads RGIGSGLGKTA.

Belongs to the universal ribosomal protein uL15 family. In terms of assembly, part of the 50S ribosomal subunit.

Its function is as follows. Binds to the 23S rRNA. This is Large ribosomal subunit protein uL15 from Bordetella avium (strain 197N).